The chain runs to 215 residues: Ribosomal RNA small subunit methyltransferase G (215 aa).

S-adenosyl-L-methionine contacts are provided by residues Gly-77, Phe-82, 130-131 (IE), and Arg-146.

This sequence belongs to the methyltransferase superfamily. RNA methyltransferase RsmG family.

The protein resides in the cytoplasm. It carries out the reaction guanosine(527) in 16S rRNA + S-adenosyl-L-methionine = N(7)-methylguanosine(527) in 16S rRNA + S-adenosyl-L-homocysteine. Its function is as follows. Specifically methylates the N7 position of guanine in position 527 of 16S rRNA. This Bartonella henselae (strain ATCC 49882 / DSM 28221 / CCUG 30454 / Houston 1) (Rochalimaea henselae) protein is Ribosomal RNA small subunit methyltransferase G.